The following is a 100-amino-acid chain: NADH-quinone oxidoreductase subunit K (100 aa).

The next 3 membrane-spanning stretches (helical) occupy residues 2–22 (ISLNHYLLLCVILFCIGLFGI), 28–48 (ILMLFFSTEILLNAINIGFVA), and 63–83 (LFIIAIAASEIAVGLGLVVIW).

Belongs to the complex I subunit 4L family. NDH-1 is composed of 14 different subunits. Subunits NuoA, H, J, K, L, M, N constitute the membrane sector of the complex.

It is found in the cell inner membrane. The catalysed reaction is a quinone + NADH + 5 H(+)(in) = a quinol + NAD(+) + 4 H(+)(out). NDH-1 shuttles electrons from NADH, via FMN and iron-sulfur (Fe-S) centers, to quinones in the respiratory chain. The immediate electron acceptor for the enzyme in this species is believed to be ubiquinone. Couples the redox reaction to proton translocation (for every two electrons transferred, four hydrogen ions are translocated across the cytoplasmic membrane), and thus conserves the redox energy in a proton gradient. The protein is NADH-quinone oxidoreductase subunit K of Helicobacter hepaticus (strain ATCC 51449 / 3B1).